Consider the following 765-residue polypeptide: Transcription factor RFX3 (765 aa).

The RFX-type winged-helix DNA-binding region spans 189 to 264; sequence HLQWLLDNYE…YHYYGIRVKP (76 aa).

Belongs to the RFX family.

It is found in the nucleus. Functionally, transcription factor required for ciliogenesis and islet cell differentiation during endocrine pancreas development. The protein is Transcription factor RFX3 (rfx3) of Danio rerio (Zebrafish).